Here is a 695-residue protein sequence, read N- to C-terminus: Nucleoprotein (695 aa).

2 coiled-coil regions span residues 316-341 (VNVG…RRHE) and 372-399 (QTLA…VEDQ). Disordered regions lie at residues 424 to 458 (QARP…SFVD) and 483 to 615 (TSRE…AREA). Over residues 438 to 447 (VDDKIEHEST) the composition is skewed to basic and acidic residues. Composition is skewed to polar residues over residues 494 to 505 (PGQSQDLDNSQG) and 537 to 552 (TTDS…SDNE). The PTAP/PSAP motif signature appears at 603-606 (PSAP).

It belongs to the filoviruses nucleoprotein family. As to quaternary structure, homooligomer. Homomultimerizes to form the nucleocapsid. Binds to viral genomic RNA. Interacts with VP35 and VP30 to form the nucleocapsid. Also interacts with VP24 and VP40. Phosphorylated.

Its subcellular location is the virion. It localises to the host cytoplasm. Its function is as follows. Encapsidates the genome, protecting it from nucleases. The encapsidated genomic RNA is termed the nucleocapsid and serves as template for transcription and replication. During replication, encapsidation by NP is coupled to RNA synthesis and all replicative products are resistant to nucleases. In Lake Victoria marburgvirus (strain Ozolin-75) (MARV), this protein is Nucleoprotein (NP).